Reading from the N-terminus, the 275-residue chain is Gap junction gamma-3 protein (275 aa).

Residues Met-1–Arg-22 are Cytoplasmic-facing. The chain crosses the membrane as a helical span at residues Leu-23–Val-43. At Phe-44–Arg-77 the chain is on the extracellular side. The chain crosses the membrane as a helical span at residues Phe-78–Leu-98. Residues Tyr-99–Arg-134 lie on the Cytoplasmic side of the membrane. The chain crosses the membrane as a helical span at residues Leu-135–Gly-155. The Extracellular portion of the chain corresponds to Gly-156–Thr-196. A helical transmembrane segment spans residues Met-197–Leu-217. The Cytoplasmic portion of the chain corresponds to Gly-218–Pro-275. Residues Glu-254–Ser-267 are compositionally biased toward basic and acidic residues. Residues Glu-254–Pro-275 are disordered.

It belongs to the connexin family. Gamma-type subfamily. In terms of assembly, a connexon is composed of a hexamer of connexins.

The protein localises to the cell membrane. The protein resides in the cell junction. Its subcellular location is the gap junction. Its function is as follows. One gap junction consists of a cluster of closely packed pairs of transmembrane channels, the connexons, through which materials of low MW diffuse from one cell to a neighboring cell. The sequence is that of Gap junction gamma-3 protein (GJC3) from Bos taurus (Bovine).